Here is a 993-residue protein sequence, read N- to C-terminus: Signal peptide, CUB and EGF-like domain-containing protein 3 (993 aa).

Positions 1-20 (MGSGRVPGLCLLVLLVHARA) are cleaved as a signal peptide. In terms of domain architecture, EGF-like 1; calcium-binding spans 29–69 (DVDECVEGTDNCHIDAICQNTPRSYKCICKSGYTGDGKHCK). Cystine bridges form between cysteine 33–cysteine 46, cysteine 40–cysteine 55, cysteine 57–cysteine 68, cysteine 74–cysteine 86, cysteine 82–cysteine 95, cysteine 97–cysteine 110, cysteine 116–cysteine 127, cysteine 123–cysteine 136, cysteine 161–cysteine 172, cysteine 168–cysteine 182, cysteine 184–cysteine 197, cysteine 201–cysteine 212, cysteine 208–cysteine 221, cysteine 223–cysteine 236, cysteine 240–cysteine 251, cysteine 247–cysteine 260, cysteine 262–cysteine 275, cysteine 281–cysteine 292, cysteine 288–cysteine 301, cysteine 303–cysteine 316, cysteine 322–cysteine 332, cysteine 328–cysteine 341, cysteine 343–cysteine 355, cysteine 361–cysteine 372, cysteine 368–cysteine 381, and cysteine 383–cysteine 397. An EGF-like 2; calcium-binding domain is found at 70–111 (DVDECEREDNAGCVHDCVNIPGNYRCTCYDGFHLAHDGHNCL). The EGF-like 3; calcium-binding domain maps to 112–148 (DVDECAEGNGGCQQSCVNMMGSYECHCREGFFLSDNQ). 3 EGF-like domains span residues 157-198 (EGMN…RDCK), 199-237 (LTCNYGNGGCQHTCDDTEQGPRCGCHIKFVLHTDGKTCI), and 238-276 (ETCAVNNGGCDSKCHDAATGVHCTCPVGFMLQPDRKTCK). The 41-residue stretch at 277–317 (DIDECRLNNGGCDHICRNTVGSFECSCKKGYKLLINERNCQ) folds into the EGF-like 7; calcium-binding domain. The 39-residue stretch at 318–356 (DIDECSFDRTCDHICVNTPGSFQCLCHRGYLLYGITHCG) folds into the EGF-like 8; calcium-binding domain. In terms of domain architecture, EGF-like 9; calcium-binding spans 357 to 398 (DVDECSINRGGCRFGCINTPGSYQCTCPAGQGRLHWNGKDCT). Residues asparagine 417, asparagine 464, asparagine 685, asparagine 756, and asparagine 785 are each glycosylated (N-linked (GlcNAc...) asparagine). 2 cysteine pairs are disulfide-bonded: cysteine 804–cysteine 830 and cysteine 857–cysteine 878. Positions 804 to 916 (CGGELGEFTG…RGFQIPYVTY (113 aa)) constitute a CUB domain.

As to quaternary structure, forms homooligomers. Forms heterooligomers with SCUBE1 and SCUBE2. Interacts with TGFBR2 through the CUB domain; this interaction does not affect TGFB1-binding to TGFBR2. Interacts with BMP2, BMP4 and BMP7; the interaction is mediated by the CUB domain. Interacts with BMPR1A, BMPR1B and BMPR2; the interaction with BMPR1A and BMPR1B is BMP2- and BMP4-dependent. Post-translationally, N-glycosylated. Proteolytic cleavage produces a CUB-containing C-terminal fragment that retains the ability to bind to TGFBR2. This reaction is catalyzed in vitro by MMP2 and, to a lesser extent, by MMP9. In terms of tissue distribution, highly expressed in osteoblasts. In normal lung, mainly expressed in bronchial epithelial cells. Tends to be up-regulated in lung cancer cells.

It is found in the secreted. The protein resides in the cell surface. Its function is as follows. Is a positive regulator of the BMP signaling pathway, required for proper chondrogenesis, osteogenesis and skeletal development. It acts as a coreceptor for BMP ligands, particularly BMP2 and BMP4, facilitating their interactions with BMP type I receptors. It is required for ligand-induced recruitment of BMP receptors to lipid rafts. Binds to TGFBR2 and activates TGFB signaling. In lung cancer cells, could serve as an endogenous autocrine and paracrine ligand of TGFBR2, which could regulate TGFBR2 signaling and hence modulate epithelial-mesenchymal transition and cancer progression. This Homo sapiens (Human) protein is Signal peptide, CUB and EGF-like domain-containing protein 3.